The chain runs to 513 residues: Nitrate transporter 2.2 (513 aa).

A run of 12 helical transmembrane segments spans residues 38 to 58, 74 to 94, 98 to 118, 128 to 148, 158 to 178, 196 to 216, 247 to 265, 281 to 301, 323 to 343, 351 to 371, 383 to 403, and 419 to 439; these read WICF…APVI, VSAV…VDVV, YGAA…ALVT, FFIG…GTMF, AIAA…MPLI, AFFV…LLGI, LGNY…SFGV, FGLN…MNIF, LWVL…MGKV, IVIM…HFGI, VSGL…AIWF, and FVWM…IWFP.

Belongs to the major facilitator superfamily. Nitrate/nitrite porter (TC 2.A.1.8) family.

The protein localises to the cell membrane. Functionally, involved in nitrate transport, but does not seem to be able to mediate transport by its own. Acts as a dual component transporter with NAR2 (system 2). Involved in a high affinity transport specific for nitrate. The sequence is that of Nitrate transporter 2.2 from Chlamydomonas reinhardtii (Chlamydomonas smithii).